Here is a 754-residue protein sequence, read N- to C-terminus: Phosphoinositide 3-kinase regulatory subunit 6 (754 aa).

The tract at residues 343–363 (ERDLPTGADELPAPGSPEMER) is disordered.

As to quaternary structure, heterodimer of a catalytic subunit (PIK3CG) and a regulatory (PIK3R6) subunit. The binding of PIK3R6 to PIK3CG may exclude the binding of PIK3R5 to PIK3CG. Interacts with beta-gamma G protein dimers. Interacts with PDE3B and RAPGEF3; form a signaling complex that regulates phosphatidylinositol 3-kinase gamma in angiogenesis.

It localises to the cytoplasm. Its subcellular location is the cell membrane. Functionally, regulatory subunit of the PI3K gamma complex. Acts as an adapter to drive activation of PIK3CG by beta-gamma G protein dimers. The PIK3CG:PIK3R6 heterodimer is much less sensitive to beta-gamma G protein dimers than PIK3CG:PIK3R5 and its membrane recruitment and beta-gamma G protein dimer-dependent activation requires HRAS bound to PIK3CG. Recruits of the PI3K gamma complex to a PDE3B:RAPGEF3 signaling complex involved in angiogenesis; signaling seems to involve RRAS. The sequence is that of Phosphoinositide 3-kinase regulatory subunit 6 (PIK3R6) from Homo sapiens (Human).